The following is a 151-amino-acid chain: Brain ribonuclease (151 aa).

Residues 1-25 (KESAAAKFRRQHMDAGSSSSGNSNY) are disordered. Lysine 7 and arginine 10 together coordinate substrate. Histidine 12 serves as the catalytic Proton acceptor. 4 cysteine pairs are disulfide-bonded: cysteine 26-cysteine 84, cysteine 40-cysteine 95, cysteine 58-cysteine 110, and cysteine 65-cysteine 72. A substrate-binding site is contributed by 41 to 45 (KPVNT). Residue asparagine 62 is glycosylated (N-linked (GlcNAc...) asparagine). Positions 66 and 85 each coordinate substrate. The Proton donor role is filled by histidine 119. O-linked (GalNAc...) threonine glycosylation is present at threonine 129. O-linked (GalNAc...) serine glycosylation is present at serine 133.

This sequence belongs to the pancreatic ribonuclease family.

Its subcellular location is the secreted. This is Brain ribonuclease (BRN) from Axis porcinus (Hog deer).